Here is a 155-residue protein sequence, read N- to C-terminus: Pathogenesis-related protein B (155 aa).

This sequence belongs to the BetVI family.

The polypeptide is Pathogenesis-related protein B (PCPR1-3) (Petroselinum crispum (Parsley)).